Here is a 384-residue protein sequence, read N- to C-terminus: Succinyl-diaminopimelate desuccinylase (384 aa).

Residue His73 coordinates Zn(2+). Asp75 is a catalytic residue. Asp106 is a Zn(2+) binding site. Residue Glu140 is the Proton acceptor of the active site. 3 residues coordinate Zn(2+): Glu141, Glu169, and His358.

Belongs to the peptidase M20A family. DapE subfamily. As to quaternary structure, homodimer. Zn(2+) is required as a cofactor. Requires Co(2+) as cofactor.

The enzyme catalyses N-succinyl-(2S,6S)-2,6-diaminopimelate + H2O = (2S,6S)-2,6-diaminopimelate + succinate. It functions in the pathway amino-acid biosynthesis; L-lysine biosynthesis via DAP pathway; LL-2,6-diaminopimelate from (S)-tetrahydrodipicolinate (succinylase route): step 3/3. Catalyzes the hydrolysis of N-succinyl-L,L-diaminopimelic acid (SDAP), forming succinate and LL-2,6-diaminopimelate (DAP), an intermediate involved in the bacterial biosynthesis of lysine and meso-diaminopimelic acid, an essential component of bacterial cell walls. The sequence is that of Succinyl-diaminopimelate desuccinylase from Pelagibacter ubique (strain HTCC1062).